The chain runs to 163 residues: Protein-export protein SecB (163 aa).

This sequence belongs to the SecB family. As to quaternary structure, homotetramer, a dimer of dimers. One homotetramer interacts with 1 SecA dimer.

The protein resides in the cytoplasm. One of the proteins required for the normal export of preproteins out of the cell cytoplasm. It is a molecular chaperone that binds to a subset of precursor proteins, maintaining them in a translocation-competent state. It also specifically binds to its receptor SecA. In Caulobacter vibrioides (strain ATCC 19089 / CIP 103742 / CB 15) (Caulobacter crescentus), this protein is Protein-export protein SecB.